Here is a 522-residue protein sequence, read N- to C-terminus: Amine oxidase [flavin-containing] (522 aa).

At 1-492 (MTANAYDVIV…WERNLPSVGG (492 aa)) the chain is on the cytoplasmic side. C398 bears the S-8alpha-FAD cysteine mark. Residues 493–513 (FLKFMGVSSFLAAATAAGLVA) form a helical; Anchor for type IV membrane protein membrane-spanning segment. Topologically, residues 514-522 (CKKGLLPRC) are mitochondrial intermembrane.

The protein belongs to the flavin monoamine oxidase family. In terms of assembly, monomer, homo- or heterodimer (containing two subunits of similar size). Each subunit contains a covalently bound flavin. Enzymatically active as monomer. The cofactor is FAD. As to expression, strongest expression in brain and intestine, followed by liver, heart and gill. Little expression in spleen, eye or muscle. In brain, highest activity in noradrenergic and serotonergic cell groups and those of the habenulointerpeduncular pathway; moderate levels in dopaminergic cell clusters.

It is found in the mitochondrion outer membrane. It carries out the reaction a secondary aliphatic amine + O2 + H2O = a primary amine + an aldehyde + H2O2. The catalysed reaction is a primary methyl amine + O2 + H2O = an aldehyde + H2O2 + NH4(+). It catalyses the reaction serotonin + O2 + H2O = (5-hydroxyindol-3-yl)acetaldehyde + H2O2 + NH4(+). The enzyme catalyses 2-phenylethylamine + O2 + H2O = 2-phenylacetaldehyde + H2O2 + NH4(+). It carries out the reaction tyramine + O2 + H2O = (4-hydroxyphenyl)acetaldehyde + H2O2 + NH4(+). The catalysed reaction is dopamine + O2 + H2O = 3,4-dihydroxyphenylacetaldehyde + H2O2 + NH4(+). It catalyses the reaction (R)-adrenaline + O2 + H2O = (R)-3,4-dihydroxymandelaldehyde + methylamine + H2O2. The enzyme catalyses (R)-noradrenaline + O2 + H2O = (R)-3,4-dihydroxymandelaldehyde + H2O2 + NH4(+). It carries out the reaction kynuramine + O2 + H2O = 3-(2-aminophenyl)-3-oxopropanal + H2O2 + NH4(+). The catalysed reaction is tryptamine + O2 + H2O = indole-3-acetaldehyde + H2O2 + NH4(+). With respect to regulation, inhibited by both clorgyline (selective MAOA inhibitor) and deprenyl (selective MAOB inhibitor). Catalyzes the oxidative deamination of biogenic and xenobiotic amines and has important functions in the metabolism of neuroactive and vasoactive amines in the central nervous system and peripheral tissues. Preferentially oxidizes serotonin and tyramine. Also catalyzes the oxidative deamination of kynuramine to 3-(2-aminophenyl)-3-oxopropanal that can spontaneously condense to 4-hydroxyquinoline. This is Amine oxidase [flavin-containing] from Danio rerio (Zebrafish).